Consider the following 1462-residue polypeptide: Tyrosine-protein phosphatase 69D (1462 aa).

An N-terminal signal peptide occupies residues 1-28 (MALLYRRMSMLLNIILAYIFLCAICVQG). 2 Ig-like C2-type domains span residues 29-125 (SVKQ…TEFQ) and 131-230 (PSKV…KEIT). Topologically, residues 29–805 (SVKQEWAEIG…MDYYLSIGVK (777 aa)) are extracellular. Residues N40, N58, N64, N85, N109, N119, N162, N191, N196, N209, N255, N288, N302, N429, N442, N451, N516, N613, N701, and N755 are each glycosylated (N-linked (GlcNAc...) asparagine). C45 and C112 are oxidised to a cystine. C154 and C214 form a disulfide bridge. 3 Fibronectin type-III domains span residues 237-332 (PQVS…TLSY), 334-435 (PIFI…TMDG), and 439-547 (KPTN…TPDA). Residues 806-823 (AGAVLLGVILVFIVLWVF) form a helical membrane-spanning segment. Topologically, residues 824-1462 (HHKKTKNELQ…LHHIAESTLD (639 aa)) are cytoplasmic. Tyrosine-protein phosphatase domains lie at 893 to 1156 (FLRE…LLDT) and 1187 to 1450 (LEVE…IINY). Active-site phosphocysteine intermediate residues include C1097 and C1391.

Belongs to the protein-tyrosine phosphatase family. Receptor class subfamily.

It localises to the membrane. The catalysed reaction is O-phospho-L-tyrosyl-[protein] + H2O = L-tyrosyl-[protein] + phosphate. In terms of biological role, possible cell adhesion receptor. The chain is Tyrosine-protein phosphatase 69D (Ptp69D) from Drosophila melanogaster (Fruit fly).